A 342-amino-acid polypeptide reads, in one-letter code: Isopentenyl-diphosphate delta-isomerase (342 aa).

Position 12–13 (12–13 (RK)) interacts with substrate. Residues 71 to 73 (AMT), Ser101, and Asn129 contribute to the FMN site. A substrate-binding site is contributed by 101–103 (SQR). Gln163 serves as a coordination point for substrate. Glu164 contacts Mg(2+). Residues Lys195, Thr225, 272–274 (GIR), and 293–294 (AR) contribute to the FMN site.

Belongs to the IPP isomerase type 2 family. As to quaternary structure, homooctamer. Dimer of tetramers. Requires FMN as cofactor. NADPH is required as a cofactor. The cofactor is Mg(2+).

It is found in the cytoplasm. It catalyses the reaction isopentenyl diphosphate = dimethylallyl diphosphate. Involved in the biosynthesis of isoprenoids. Catalyzes the 1,3-allylic rearrangement of the homoallylic substrate isopentenyl (IPP) to its allylic isomer, dimethylallyl diphosphate (DMAPP). The sequence is that of Isopentenyl-diphosphate delta-isomerase from Mycolicibacterium vanbaalenii (strain DSM 7251 / JCM 13017 / BCRC 16820 / KCTC 9966 / NRRL B-24157 / PYR-1) (Mycobacterium vanbaalenii).